The sequence spans 1150 residues: GPI inositol-deacylase (1150 aa).

Residues 1-43 (MQGRPNGASGDPNPRNDTSVTIDSDSDNGSRHRIAEVRGSSPS) are disordered. N-linked (GlcNAc...) asparagine glycosylation is found at Asn-16 and Asn-28. A helical membrane pass occupies residues 122–142 (ICSGLVLFVTVSALLILSIIV). Residue Ser-309 is part of the active site. A helical membrane pass occupies residues 790–810 (LAMRYRTVFAAFPLLVVSLVL). Asn-818 carries an N-linked (GlcNAc...) asparagine glycan. A helical transmembrane segment spans residues 829–849 (ALDLCIRSSIPLLFLGLTFLA). Asn-870 is a glycosylation site (N-linked (GlcNAc...) asparagine). Residues 890 to 910 (AFFWFLVPLFGIISIGTCVIV) traverse the membrane as a helical segment. N-linked (GlcNAc...) asparagine glycosylation occurs at Asn-942. The next 5 membrane-spanning stretches (helical) occupy residues 960–980 (VLLL…VACV), 1010–1030 (SIFI…IVWI), 1047–1067 (VFSI…TMIP), 1079–1099 (VLFF…AYLL), and 1102–1122 (ITNL…GFSL). 2 N-linked (GlcNAc...) asparagine glycosylation sites follow: Asn-1124 and Asn-1130.

The protein belongs to the GPI inositol-deacylase family.

The protein localises to the endoplasmic reticulum membrane. In terms of biological role, involved in inositol deacylation of GPI-anchored proteins which plays important roles in the quality control and ER-associated degradation of GPI-anchored proteins. The protein is GPI inositol-deacylase (BST1) of Coccidioides immitis (strain RS) (Valley fever fungus).